A 332-amino-acid chain; its full sequence is L-lactate dehydrogenase A chain (332 aa).

NAD(+) is bound by residues 29-57 (GAVG…IEDK) and R99. R106, N138, and R169 together coordinate substrate. NAD(+) is bound at residue N138. Catalysis depends on H193, which acts as the Proton acceptor. Position 248 (T248) interacts with substrate.

This sequence belongs to the LDH/MDH superfamily. LDH family. As to quaternary structure, homotetramer.

It localises to the cytoplasm. The catalysed reaction is (S)-lactate + NAD(+) = pyruvate + NADH + H(+). The protein operates within fermentation; pyruvate fermentation to lactate; (S)-lactate from pyruvate: step 1/1. Its function is as follows. Interconverts simultaneously and stereospecifically pyruvate and lactate with concomitant interconversion of NADH and NAD(+). In Pelodiscus sinensis japonicus (Chinese soft-shelled turtle), this protein is L-lactate dehydrogenase A chain (LDHA).